Consider the following 126-residue polypeptide: Large ribosomal subunit protein bL12 (126 aa).

It belongs to the bacterial ribosomal protein bL12 family. As to quaternary structure, homodimer. Part of the ribosomal stalk of the 50S ribosomal subunit. Forms a multimeric L10(L12)X complex, where L10 forms an elongated spine to which 2 to 4 L12 dimers bind in a sequential fashion. Binds GTP-bound translation factors.

Functionally, forms part of the ribosomal stalk which helps the ribosome interact with GTP-bound translation factors. Is thus essential for accurate translation. The polypeptide is Large ribosomal subunit protein bL12 (Prosthecochloris aestuarii (strain DSM 271 / SK 413)).